The primary structure comprises 201 residues: MAGSFAELARQADKSRDTMLVPKTALETPPLEIHTLGDEVLRQPARRIGKVNEQVRELARDMLRSMYTAKGIGLAAPQVGIHQQLLVIDLDLENAATPPLVLINPEITAASAGLDTYEEGCLSIPGVYLDVVRPTAIELSFRDEMGRPRKMKADGLMARCIQHEMDHLNGVLFVDRVTDQDGLQKELKEKGFERQDVRSVA.

Residues Cys121 and His163 each contribute to the Fe cation site. Glu164 is an active-site residue. Fe cation is bound at residue His167.

This sequence belongs to the polypeptide deformylase family. Fe(2+) is required as a cofactor.

It carries out the reaction N-terminal N-formyl-L-methionyl-[peptide] + H2O = N-terminal L-methionyl-[peptide] + formate. Its function is as follows. Removes the formyl group from the N-terminal Met of newly synthesized proteins. Requires at least a dipeptide for an efficient rate of reaction. N-terminal L-methionine is a prerequisite for activity but the enzyme has broad specificity at other positions. This Synechococcus sp. (strain CC9605) protein is Peptide deformylase.